The following is a 195-amino-acid chain: Probable molybdenum cofactor guanylyltransferase (195 aa).

GTP contacts are provided by residues 6–8 (LAG), lysine 18, aspartate 67, and aspartate 93. Aspartate 93 lines the Mg(2+) pocket.

This sequence belongs to the MobA family. It depends on Mg(2+) as a cofactor.

The protein localises to the cytoplasm. The enzyme catalyses Mo-molybdopterin + GTP + H(+) = Mo-molybdopterin guanine dinucleotide + diphosphate. Transfers a GMP moiety from GTP to Mo-molybdopterin (Mo-MPT) cofactor (Moco or molybdenum cofactor) to form Mo-molybdopterin guanine dinucleotide (Mo-MGD) cofactor. This chain is Probable molybdenum cofactor guanylyltransferase, found in Thermococcus sibiricus (strain DSM 12597 / MM 739).